We begin with the raw amino-acid sequence, 238 residues long: tRNA1(Val) (adenine(37)-N6)-methyltransferase (238 aa).

It belongs to the methyltransferase superfamily. tRNA (adenine-N(6)-)-methyltransferase family.

It localises to the cytoplasm. It carries out the reaction adenosine(37) in tRNA1(Val) + S-adenosyl-L-methionine = N(6)-methyladenosine(37) in tRNA1(Val) + S-adenosyl-L-homocysteine + H(+). In terms of biological role, specifically methylates the adenine in position 37 of tRNA(1)(Val) (anticodon cmo5UAC). This chain is tRNA1(Val) (adenine(37)-N6)-methyltransferase, found in Shewanella baltica (strain OS223).